The sequence spans 379 residues: Beta sliding clamp (379 aa).

This sequence belongs to the beta sliding clamp family. As to quaternary structure, forms a ring-shaped head-to-tail homodimer around DNA which binds and tethers DNA polymerases and other proteins to the DNA. The DNA replisome complex has a single clamp-loading complex (3 tau and 1 each of delta, delta', psi and chi subunits) which binds 3 Pol III cores (1 core on the leading strand and 2 on the lagging strand) each with a beta sliding clamp dimer. Additional proteins in the replisome are other copies of gamma, psi and chi, Ssb, DNA helicase and RNA primase.

It localises to the cytoplasm. Its function is as follows. Confers DNA tethering and processivity to DNA polymerases and other proteins. Acts as a clamp, forming a ring around DNA (a reaction catalyzed by the clamp-loading complex) which diffuses in an ATP-independent manner freely and bidirectionally along dsDNA. Initially characterized for its ability to contact the catalytic subunit of DNA polymerase III (Pol III), a complex, multichain enzyme responsible for most of the replicative synthesis in bacteria; Pol III exhibits 3'-5' exonuclease proofreading activity. The beta chain is required for initiation of replication as well as for processivity of DNA replication. The polypeptide is Beta sliding clamp (dnaN) (Rickettsia bellii (strain RML369-C)).